Reading from the N-terminus, the 216-residue chain is ATP synthase subunit 5, mitochondrial (216 aa).

The protein belongs to the ATPase delta chain family. As to quaternary structure, F-type ATPases have 2 components, CF(1) - the catalytic core - and CF(0) - the membrane proton channel. CF(1) has five subunits: alpha(3), beta(3), gamma(1), delta(1), epsilon(1). CF(0) has three main subunits: a, b and c.

It is found in the mitochondrion. The protein resides in the mitochondrion inner membrane. Its function is as follows. Mitochondrial membrane ATP synthase (F(1)F(0) ATP synthase or Complex V) produces ATP from ADP in the presence of a proton gradient across the membrane which is generated by electron transport complexes of the respiratory chain. F-type ATPases consist of two structural domains, F(1) - containing the extramembraneous catalytic core and F(0) - containing the membrane proton channel, linked together by a central stalk and a peripheral stalk. During catalysis, ATP synthesis in the catalytic domain of F(1) is coupled via a rotary mechanism of the central stalk subunits to proton translocation. Part of the complex F(0) domain and the peripheric stalk, which acts as a stator to hold the catalytic alpha(3)beta(3) subcomplex and subunit a/ATP6 static relative to the rotary elements. This is ATP synthase subunit 5, mitochondrial (atp5) from Schizosaccharomyces pombe (strain 972 / ATCC 24843) (Fission yeast).